We begin with the raw amino-acid sequence, 219 residues long: Ran-binding protein 1 homolog c (219 aa).

A compositionally biased stretch (basic and acidic residues) spans 1–11; the sequence is MASTEPERENR. Disordered regions lie at residues 1–30 and 160–219; these read MAST…VAPI and QVGK…EAST. Residues 12–23 are compositionally biased toward acidic residues; that stretch reads EDETEVNEDEDT. Positions 26–161 constitute a RanBD1 domain; it reads QVAPIVRLEE…FTEIAESQQV (136 aa). Residues 185–219 are compositionally biased toward basic and acidic residues; the sequence is SEEKAKEAEEKEPAKEDKETKKEKVEEEKKTEAST.

The protein localises to the nucleus. Its subcellular location is the nuclear pore complex. The polypeptide is Ran-binding protein 1 homolog c (RANBP1C) (Arabidopsis thaliana (Mouse-ear cress)).